A 357-amino-acid chain; its full sequence is Alpha-2-macroglobulin receptor-associated protein (357 aa).

The signal sequence occupies residues M1–K34. Residues G32–E52 are disordered. Over residues Y35–E52 the composition is skewed to basic and acidic residues. Phosphoserine occurs at positions 50 and 135. A coiled-coil region spans residues S219 to S310. Residues R237–R353 are LDL receptor binding. T248 carries the phosphothreonine modification. N268 carries N-linked (GlcNAc...) asparagine glycosylation. A Prevents secretion from ER motif is present at residues H354–L357.

The protein belongs to the alpha-2-MRAP family. Interacts with the LRP1/alpha-2-macroglobulin receptor heavy and light chains; the interaction is transient and coincides with a reduction of ligand binding by the receptor. Interacts with LRP2/glycoprotein 330. Interacts with LRP1B; binding is followed by internalization and degradation. Interacts with LDLR. Interacts with SORL1. Interacts with LRP1; this interaction is followed by rapid internalization. N-glycosylated.

Its subcellular location is the rough endoplasmic reticulum lumen. It localises to the endoplasmic reticulum-Golgi intermediate compartment lumen. The protein resides in the golgi apparatus. The protein localises to the cis-Golgi network. It is found in the golgi apparatus lumen. Its subcellular location is the endosome lumen. It localises to the cell surface. In terms of biological role, molecular chaperone for LDL receptor-related proteins that may regulate their ligand binding activity along the secretory pathway. This is Alpha-2-macroglobulin receptor-associated protein from Homo sapiens (Human).